The primary structure comprises 80 residues: uncharacterized protein (80 aa).

This is an uncharacterized protein from Invertebrate iridescent virus 6 (IIV-6).